The sequence spans 745 residues: DNA ligase (745 aa).

Residues 1–27 (MRNHGPGSERKDACVSAPDPTFSDDVP) are disordered. NAD(+) contacts are provided by residues 57 to 61 (DAEYD), 106 to 107 (SL), and Glu135. The N6-AMP-lysine intermediate role is filled by Lys137. NAD(+) is bound by residues Arg158 and Glu197. The segment at 216–235 (GKPPFANPRNAAAGSLRQKD) is disordered. NAD(+) contacts are provided by Lys313 and Lys337. Zn(2+) contacts are provided by Cys431, Cys434, Cys450, and Cys456. The region spanning 649 to 738 (DGPRLLDGIT…PEAARAARLS (90 aa)) is the BRCT domain.

The protein belongs to the NAD-dependent DNA ligase family. LigA subfamily. It depends on Mg(2+) as a cofactor. The cofactor is Mn(2+).

The catalysed reaction is NAD(+) + (deoxyribonucleotide)n-3'-hydroxyl + 5'-phospho-(deoxyribonucleotide)m = (deoxyribonucleotide)n+m + AMP + beta-nicotinamide D-nucleotide.. Its function is as follows. DNA ligase that catalyzes the formation of phosphodiester linkages between 5'-phosphoryl and 3'-hydroxyl groups in double-stranded DNA using NAD as a coenzyme and as the energy source for the reaction. It is essential for DNA replication and repair of damaged DNA. In Thermobifida fusca (strain YX), this protein is DNA ligase.